We begin with the raw amino-acid sequence, 1663 residues long: Kotanin synthase (1663 aa).

Residues 19–168 (RPHEFSFNTQ…PLPVYGGPCH (150 aa)) are N-terminal acylcarrier protein transacylase domain (SAT). The Ketosynthase family 3 (KS3) domain occupies 301–731 (DSRIAVVGMS…GGNTSLLLEE (431 aa)). Active-site for beta-ketoacyl synthase activity residues include Cys474, His609, and His650. Residues 830 to 1149 (FIFSGQGSFY…SMCTLQETGV (320 aa)) are malonyl-CoA:ACP transacylase (MAT) domain. Residues 1209–1527 (TALVHQIMEE…PRILMNRFFD (319 aa)) form a product template (PT) domain region. The tract at residues 1213 to 1349 (HQIMEESFRP…GVVRCGDRQS (137 aa)) is N-terminal hotdog fold. Positions 1213–1523 (HQIMEESFRP…LRPLPRILMN (311 aa)) constitute a PKS/mFAS DH domain. His1245 serves as the catalytic Proton acceptor; for dehydratase activity. The interval 1376-1523 (QASRVSRDLV…LRPLPRILMN (148 aa)) is C-terminal hotdog fold. The active-site Proton donor; for dehydratase activity is Asp1434. The interval 1544 to 1580 (DLPQVQHQPSPTTDSGPDDDPKDPNTGPLTPEVDLPV) is disordered. The Carrier domain maps to 1586–1663 (KANTKLVRGA…ELKEYLTASW (78 aa)). Ser1623 bears the O-(pantetheine 4'-phosphoryl)serine mark.

The cofactor is pantetheine 4'-phosphate.

Its pathway is secondary metabolite biosynthesis. Non-reducing polyketide synthase; part of the gene cluster that mediates the biosynthesis of the bicoumarin kotanin. The non-reducing polyketide synthase ktnS first catalyzes the formation of the pentaketidic 4,7-dihydroxy-5-methylcoumarin from acetyl coenzyme A and 4 malonyl coenzyme A molecules. Further O-methylation by ktnB leads to the formation of 7-demethylsiderin. Then, an oxidative phenol coupling catalyzed by the cytochrome P450 monooxygenase ktnC forms the 8,8'-dimer P-orlandin via dimerization the monomeric precursor, 7-demethylsiderin. P-orlandin is subsequently O-methylated in a stepwise fashion to demethylkotanin and kotanin. The protein is Kotanin synthase of Aspergillus niger (strain ATCC MYA-4892 / CBS 513.88 / FGSC A1513).